A 400-amino-acid polypeptide reads, in one-letter code: MGRAKKVVLAYSGGVDTSVCIPYLKQEWGVEEVITLAADLGQGDELEPIREKALKSGASESLVADVKESFIKDYAFPAIQANALYENRYPLGTALARPLIAKILVEAAEKYGADAIAHGCTGKGNDQVRFDVSCTALNPKLKILAPAREWGMSREATIAYGEKFGIPSPVKKSSPYSIDKNLLGRSIEAGALEDPKFEPPEEIYEMTKAIADTPNEPEYIEIGFTQGLPTTINGTPKDPVALIQELNQLVGSHGVGRIDMIENRLVGIKSREIYESPAMLVLIQAHRDLESLTLTADVSHYKRGIEETYSQIVYNGLWYSPLKAALDAFIQKTQERVSGIVRVKLFKGNATIVGRWSDSSLYTPDLATYGAEDQFDHKAAEGFIYVWGLPTRIWAQQDRG.

ATP-binding positions include 10–18 (AYSGGVDTS) and Ala-38. Residue Tyr-89 coordinates L-citrulline. Gly-119 lines the ATP pocket. Residues Thr-121, Asn-125, and Asp-126 each coordinate L-aspartate. Asn-125 contributes to the L-citrulline binding site. The L-citrulline site is built by Arg-129, Ser-177, Ser-186, Glu-262, and Tyr-274.

Belongs to the argininosuccinate synthase family. Type 1 subfamily. As to quaternary structure, homotetramer.

It is found in the cytoplasm. It catalyses the reaction L-citrulline + L-aspartate + ATP = 2-(N(omega)-L-arginino)succinate + AMP + diphosphate + H(+). It functions in the pathway amino-acid biosynthesis; L-arginine biosynthesis; L-arginine from L-ornithine and carbamoyl phosphate: step 2/3. The sequence is that of Argininosuccinate synthase from Trichormus variabilis (strain ATCC 29413 / PCC 7937) (Anabaena variabilis).